Reading from the N-terminus, the 271-residue chain is Formamidopyrimidine-DNA glycosylase (271 aa).

Catalysis depends on proline 2, which acts as the Schiff-base intermediate with DNA. The active-site Proton donor is glutamate 3. Lysine 58 (proton donor; for beta-elimination activity) is an active-site residue. DNA contacts are provided by arginine 110 and arginine 152. Residues 237–271 form an FPG-type zinc finger; that stretch reads AVYGQTGKPCTVCGTPIARIRLGNRSTWFCPVCQK. Arginine 261 acts as the Proton donor; for delta-elimination activity in catalysis.

This sequence belongs to the FPG family. As to quaternary structure, monomer. It depends on Zn(2+) as a cofactor.

It carries out the reaction Hydrolysis of DNA containing ring-opened 7-methylguanine residues, releasing 2,6-diamino-4-hydroxy-5-(N-methyl)formamidopyrimidine.. The enzyme catalyses 2'-deoxyribonucleotide-(2'-deoxyribose 5'-phosphate)-2'-deoxyribonucleotide-DNA = a 3'-end 2'-deoxyribonucleotide-(2,3-dehydro-2,3-deoxyribose 5'-phosphate)-DNA + a 5'-end 5'-phospho-2'-deoxyribonucleoside-DNA + H(+). Its function is as follows. Involved in base excision repair of DNA damaged by oxidation or by mutagenic agents. Acts as a DNA glycosylase that recognizes and removes damaged bases. Has a preference for oxidized purines, such as 7,8-dihydro-8-oxoguanine (8-oxoG). Has AP (apurinic/apyrimidinic) lyase activity and introduces nicks in the DNA strand. Cleaves the DNA backbone by beta-delta elimination to generate a single-strand break at the site of the removed base with both 3'- and 5'-phosphates. This is Formamidopyrimidine-DNA glycosylase from Geobacter sulfurreducens (strain ATCC 51573 / DSM 12127 / PCA).